The sequence spans 78 residues: Small ribosomal subunit protein bS20 (78 aa).

The interval 55-78 (KSKGLIHKNKASRDKARLASKLAK) is disordered.

This sequence belongs to the bacterial ribosomal protein bS20 family.

In terms of biological role, binds directly to 16S ribosomal RNA. In Streptococcus mutans serotype c (strain ATCC 700610 / UA159), this protein is Small ribosomal subunit protein bS20.